We begin with the raw amino-acid sequence, 264 residues long: Wtf element wtf11 (264 aa).

Residues 1-12 (MNSNYVPLTSSV) show a composition bias toward polar residues. Residues 1–26 (MNSNYVPLTSSVDVEEKMESENGVDL) form a disordered region. 4 consecutive transmembrane segments (helical) span residues 107–127 (LLFV…VIFG), 145–165 (LSWF…YDFW), 180–200 (WKNT…GFFV), and 217–237 (SLFA…FETL).

It belongs to the WTF family.

The protein localises to the membrane. In terms of biological role, may act in meiotic drive. In Schizosaccharomyces pombe (strain 972 / ATCC 24843) (Fission yeast), this protein is Wtf element wtf11.